A 1282-amino-acid polypeptide reads, in one-letter code: Ribosome biogenesis protein BMS1 homolog (1282 aa).

The span at 1–24 (MEAKDQKKHRKKNSGPKAAKKKKR) shows a compositional bias: basic residues. The segment at 1 to 43 (MEAKDQKKHRKKNSGPKAAKKKKRLLQDLQLGDEEDARKRNPK) is disordered. A Glycyl lysine isopeptide (Lys-Gly) (interchain with G-Cter in SUMO2) cross-link involves residue Lys43. The region spanning 80-245 (PPPIVVVVMG…GRFITVMKFR (166 aa)) is the Bms1-type G domain. Residues 89–96 (GPPKVGKS) form a G1 region. Residue 89–96 (GPPKVGKS) coordinates ATP. The tract at residues 117–121 (PVTIV) is G2. The G3 stretch occupies residues 132 to 135 (ECGC). The segment at 184–187 (THLD) is G4. The residue at position 188 (Ser188) is a Phosphoserine. A G5 region spans residues 219–228 (LSGMVHGEYQ). Disordered regions lie at residues 397-557 (DSKP…ANCQ) and 575-667 (PTFD…ALKW). Glycyl lysine isopeptide (Lys-Gly) (interchain with G-Cter in SUMO2) cross-links involve residues Lys399 and Lys415. Acidic residues-rich tracts occupy residues 434 to 472 (GDED…ENAE) and 503 to 531 (DSDD…EDCT). Low complexity predominate over residues 535–550 (KGISGSKAAGEGSKAG). Ser552 bears the Phosphoserine mark. The segment covering 588 to 610 (FASEDESEESSSLSAEEEDSENE) has biased composition (acidic residues). Ser625 and Ser639 each carry phosphoserine. Residue Lys646 forms a Glycyl lysine isopeptide (Lys-Gly) (interchain with G-Cter in SUMO2) linkage. Residues 653-667 (EENNDSKETSGALKW) are compositionally biased toward basic and acidic residues. Thr708 carries the phosphothreonine modification. Disordered stretches follow at residues 787 to 822 (ETGD…ESAK) and 1178 to 1202 (NKPK…IREP). Lys810 participates in a covalent cross-link: Glycyl lysine isopeptide (Lys-Gly) (interchain with G-Cter in SUMO1); alternate. Residue Lys810 forms a Glycyl lysine isopeptide (Lys-Gly) (interchain with G-Cter in SUMO2); alternate linkage. Lys1206 is covalently cross-linked (Glycyl lysine isopeptide (Lys-Gly) (interchain with G-Cter in SUMO2)). The tract at residues 1219-1282 (SQKMKKAKEQ…SLKGAEGQLQ (64 aa)) is disordered. Basic and acidic residues predominate over residues 1228-1248 (QRHLHNKEHFRAKQKEEEEKL). Positions 1249 to 1259 (KRQKDLRKKLF) are enriched in basic residues.

It belongs to the TRAFAC class translation factor GTPase superfamily. Bms1-like GTPase family. BMS1 subfamily. In terms of assembly, part of the small subunit (SSU) processome, composed of more than 70 proteins and the RNA chaperone small nucleolar RNA (snoRNA) U3. Interacts with RCL1.

The protein localises to the nucleus. It localises to the nucleolus. The enzyme catalyses GTP + H2O = GDP + phosphate + H(+). GTPase required for the synthesis of 40S ribosomal subunits and for processing of pre-ribosomal RNA (pre-rRNA) at sites A0, A1, and A2. Controls access of pre-rRNA intermediates to RCL1 during ribosome biogenesis by binding RCL1 in a GTP-dependent manner, and delivering it to pre-ribosomes. GTP-binding and/or GTP hydrolysis may induce conformational rearrangements within the BMS1-RCL1 complex allowing the interaction of RCL1 with its RNA substrate. Required for RCL1 import into the nucleus. The polypeptide is Ribosome biogenesis protein BMS1 homolog (Homo sapiens (Human)).